Reading from the N-terminus, the 229-residue chain is Putative N-acetylmannosamine-6-phosphate 2-epimerase (229 aa).

Belongs to the NanE family.

The catalysed reaction is an N-acyl-D-glucosamine 6-phosphate = an N-acyl-D-mannosamine 6-phosphate. It functions in the pathway amino-sugar metabolism; N-acetylneuraminate degradation; D-fructose 6-phosphate from N-acetylneuraminate: step 3/5. Converts N-acetylmannosamine-6-phosphate (ManNAc-6-P) to N-acetylglucosamine-6-phosphate (GlcNAc-6-P). The protein is Putative N-acetylmannosamine-6-phosphate 2-epimerase of Salmonella agona (strain SL483).